A 295-amino-acid chain; its full sequence is Probable endonuclease lcl3 (295 aa).

The segment at 1-35 (MRWPPWASDSQAQQQTAKHDEHDERQAAAKSTTTS) is disordered. Positions 17–27 (AKHDEHDERQA) are enriched in basic and acidic residues. The chain crosses the membrane as a helical span at residues 52 to 74 (FTEARTIIPTLILTSGFLGAFYI). The TNase-like domain maps to 96-263 (RSLLGQVTSV…KLRGVGLWKD (168 aa)). R147 is a catalytic residue. Position 152 (D152) interacts with Ca(2+). Residues E155 and R195 contribute to the active site.

The protein belongs to the LCL3 family.

It is found in the mitochondrion. The protein localises to the membrane. The sequence is that of Probable endonuclease lcl3 (lcl3) from Neosartorya fischeri (strain ATCC 1020 / DSM 3700 / CBS 544.65 / FGSC A1164 / JCM 1740 / NRRL 181 / WB 181) (Aspergillus fischerianus).